The chain runs to 56 residues: Repressor-like protein SSo7c4 (56 aa).

A SpoVT-AbrB domain is found at 4-51; sequence EEIVKVSRNYQVTIPAKVRQKFQIKEGDLVKVTFDESGGVVKIQLLDS.

The chain is Repressor-like protein SSo7c4 from Saccharolobus solfataricus (strain ATCC 35092 / DSM 1617 / JCM 11322 / P2) (Sulfolobus solfataricus).